Here is a 208-residue protein sequence, read N- to C-terminus: Probable nicotinate-nucleotide adenylyltransferase (208 aa).

Belongs to the NadD family.

The enzyme catalyses nicotinate beta-D-ribonucleotide + ATP + H(+) = deamido-NAD(+) + diphosphate. It functions in the pathway cofactor biosynthesis; NAD(+) biosynthesis; deamido-NAD(+) from nicotinate D-ribonucleotide: step 1/1. Functionally, catalyzes the reversible adenylation of nicotinate mononucleotide (NaMN) to nicotinic acid adenine dinucleotide (NaAD). This Acidothermus cellulolyticus (strain ATCC 43068 / DSM 8971 / 11B) protein is Probable nicotinate-nucleotide adenylyltransferase.